The chain runs to 278 residues: Glutamate racemase (278 aa).

Residues 25-26 and 57-58 contribute to the substrate site; these read DS and YG. The active-site Proton donor/acceptor is Cys89. Position 90-91 (90-91) interacts with substrate; that stretch reads NT. Cys204 acts as the Proton donor/acceptor in catalysis. 205 to 206 is a binding site for substrate; it reads TH.

Belongs to the aspartate/glutamate racemases family.

It catalyses the reaction L-glutamate = D-glutamate. It participates in cell wall biogenesis; peptidoglycan biosynthesis. In terms of biological role, provides the (R)-glutamate required for cell wall biosynthesis. The sequence is that of Glutamate racemase from Brucella anthropi (strain ATCC 49188 / DSM 6882 / CCUG 24695 / JCM 21032 / LMG 3331 / NBRC 15819 / NCTC 12168 / Alc 37) (Ochrobactrum anthropi).